The primary structure comprises 208 residues: Dephospho-CoA kinase (208 aa).

The region spanning 11-207 (VIGLTGGIAS…EYYLELAQHD (197 aa)) is the DPCK domain. An ATP-binding site is contributed by 19–24 (ASGKSA).

Belongs to the CoaE family.

It is found in the cytoplasm. The catalysed reaction is 3'-dephospho-CoA + ATP = ADP + CoA + H(+). Its pathway is cofactor biosynthesis; coenzyme A biosynthesis; CoA from (R)-pantothenate: step 5/5. In terms of biological role, catalyzes the phosphorylation of the 3'-hydroxyl group of dephosphocoenzyme A to form coenzyme A. The sequence is that of Dephospho-CoA kinase from Hahella chejuensis (strain KCTC 2396).